Here is a 373-residue protein sequence, read N- to C-terminus: 3-dehydroquinate synthase (373 aa).

NAD(+) is bound by residues Glu67–Lys72, Gly101–Asp105, Thr125–Thr126, Lys138, and Lys147. Zn(2+) is bound by residues Glu180, His240, and His256.

The protein belongs to the sugar phosphate cyclases superfamily. Dehydroquinate synthase family. Requires NAD(+) as cofactor. The cofactor is Co(2+). Zn(2+) serves as cofactor.

It is found in the cytoplasm. It carries out the reaction 7-phospho-2-dehydro-3-deoxy-D-arabino-heptonate = 3-dehydroquinate + phosphate. The protein operates within metabolic intermediate biosynthesis; chorismate biosynthesis; chorismate from D-erythrose 4-phosphate and phosphoenolpyruvate: step 2/7. Functionally, catalyzes the conversion of 3-deoxy-D-arabino-heptulosonate 7-phosphate (DAHP) to dehydroquinate (DHQ). The protein is 3-dehydroquinate synthase of Chlamydia trachomatis serovar A (strain ATCC VR-571B / DSM 19440 / HAR-13).